Reading from the N-terminus, the 338-residue chain is Phenylalanine--tRNA ligase alpha subunit (338 aa).

Residue Glu-253 participates in Mg(2+) binding.

The protein belongs to the class-II aminoacyl-tRNA synthetase family. Phe-tRNA synthetase alpha subunit type 1 subfamily. Tetramer of two alpha and two beta subunits. The cofactor is Mg(2+).

The protein localises to the cytoplasm. The catalysed reaction is tRNA(Phe) + L-phenylalanine + ATP = L-phenylalanyl-tRNA(Phe) + AMP + diphosphate + H(+). This Syntrophus aciditrophicus (strain SB) protein is Phenylalanine--tRNA ligase alpha subunit.